The sequence spans 376 residues: Serine/threonine-protein kinase-transforming protein mos (376 aa).

A Protein kinase domain is found at 94–376 (VCLMHRLGSG…KALADSIEPM (283 aa)). Residues 100-108 (LGSGGFGSV) and K121 each bind ATP. Residue D229 is the Proton acceptor of the active site.

The protein belongs to the protein kinase superfamily. Ser/Thr protein kinase family.

The enzyme catalyses L-seryl-[protein] + ATP = O-phospho-L-seryl-[protein] + ADP + H(+). The catalysed reaction is L-threonyl-[protein] + ATP = O-phospho-L-threonyl-[protein] + ADP + H(+). The protein is Serine/threonine-protein kinase-transforming protein mos (V-MOS) of Moloney murine sarcoma virus (strain m1) (MoMSV).